The following is a 225-amino-acid chain: uncharacterized protein (225 aa).

Residues 2-22 (TIFYLVFIAVIIIIILYVLYL) form a helical membrane-spanning segment. Asn73 carries an N-linked (GlcNAc...) asparagine; by host glycan. Positions 114–146 (DYEDNYFNSNWNLKQLKNQLENLLREKNYKMVL) form a coiled coil. Asn222 is a glycosylation site (N-linked (GlcNAc...) asparagine; by host).

Its subcellular location is the membrane. This is an uncharacterized protein from Acanthamoeba polyphaga (Amoeba).